The sequence spans 328 residues: Hairy/enhancer-of-split related with YRPW motif-like protein (328 aa).

Residues 1–57 (MKRPKEPSGSDGESDGPIDVGQEGQLSQMARPLSTPSSSQMQARKKHRGIIEKRRRD) form a disordered region. Residues 24–42 (GQLSQMARPLSTPSSSQMQ) are compositionally biased toward polar residues. The transcriptional repression and interaction with NCOR1 and SIN3A stretch occupies residues 42-111 (QARKKHRGII…GGTGFFDARA (70 aa)). Residues 43–98 (ARKKHRGIIEKRRRDRINSSLSELRRLVPTAFEKQGSSKLEKAEVLQMTVDHLKML) enclose the bHLH domain. In terms of domain architecture, Orange spans 116 to 153 (FRSIGFRECLTEVIRYLGVLEGPSSRADPVRIRLLSHL). The tract at residues 239-308 (SRGASSTRRA…NSSSPGPAGR (70 aa)) is disordered. The segment covering 261 to 270 (APSSRAARSS) has biased composition (low complexity).

This sequence belongs to the HEY family. Self-associates. Interacts with GATA4, GATA6, HES1, HEY1 and HEY2. Interacts with HDAC1, NCOR1 and SIN3A.

It localises to the nucleus. In terms of biological role, downstream effector of Notch signaling which may be required for cardiovascular development. Transcriptional repressor which binds preferentially to the canonical E box sequence 5'-CACGTG-3'. Represses transcription by the cardiac transcriptional activators GATA4 and GATA6. The protein is Hairy/enhancer-of-split related with YRPW motif-like protein (HEYL) of Homo sapiens (Human).